The following is a 294-amino-acid chain: RNA polymerase sigma-K factor (294 aa).

Positions 1–20 are excised as a propeptide; sequence MVTGVFAALGFVVKELVFLV. Residues 1–156 are encoded by spoIVCB; that stretch reads MVTGVFAALG…VNNCFFIFKS (156 aa). The Polymerase core binding signature appears at 79–92; the sequence is DLISIGTIGLIKGI. The interval 114–165 is not present in recombined mature factor; the sequence is EIVITKGGCIHPSLIRFNIYGVRIHNGNFFHDKVNNCFFIFKSMPPLFVMNN. The encoded by spoIIIC stretch occupies residues 157-294; the sequence is MPPLFVMNNE…KEKRKKAKGK (138 aa). The H-T-H motif DNA-binding region spans 251–270; it reads QREIAKELGISRSYVSRIEK.

The protein belongs to the sigma-70 factor family.

Functionally, sigma factors are initiation factors that promote the attachment of RNA polymerase to specific initiation sites and are then released. This sigma factor is responsible for the expression of sporulation specific genes in the mother cell. The sequence is that of RNA polymerase sigma-K factor (sigK) from Bacillus subtilis (strain 168).